We begin with the raw amino-acid sequence, 539 residues long: Chaperonin GroEL 1 (539 aa).

ATP-binding positions include 29–32 (TLGP), 86–90 (DGTTT), Gly413, 478–480 (NAA), and Asp494.

The protein belongs to the chaperonin (HSP60) family. In terms of assembly, forms a cylinder of 14 subunits composed of two heptameric rings stacked back-to-back. Interacts with the co-chaperonin GroES.

Its subcellular location is the cytoplasm. The catalysed reaction is ATP + H2O + a folded polypeptide = ADP + phosphate + an unfolded polypeptide.. In terms of biological role, together with its co-chaperonin GroES, plays an essential role in assisting protein folding. The GroEL-GroES system forms a nano-cage that allows encapsulation of the non-native substrate proteins and provides a physical environment optimized to promote and accelerate protein folding. The polypeptide is Chaperonin GroEL 1 (Corynebacterium diphtheriae (strain ATCC 700971 / NCTC 13129 / Biotype gravis)).